The primary structure comprises 431 residues: Glutamate-1-semialdehyde 2,1-aminomutase (431 aa).

Lys-265 is modified (N6-(pyridoxal phosphate)lysine).

Belongs to the class-III pyridoxal-phosphate-dependent aminotransferase family. HemL subfamily. As to quaternary structure, homodimer. Pyridoxal 5'-phosphate serves as cofactor.

The protein resides in the cytoplasm. It carries out the reaction (S)-4-amino-5-oxopentanoate = 5-aminolevulinate. It functions in the pathway porphyrin-containing compound metabolism; protoporphyrin-IX biosynthesis; 5-aminolevulinate from L-glutamyl-tRNA(Glu): step 2/2. The polypeptide is Glutamate-1-semialdehyde 2,1-aminomutase (Vibrio parahaemolyticus serotype O3:K6 (strain RIMD 2210633)).